The chain runs to 167 residues: Small heat shock protein C1 (167 aa).

The sHSP domain occupies 59–167; that stretch reads SLYESNSIKS…EQEAREIVID (109 aa).

Belongs to the small heat shock protein (HSP20) family.

This chain is Small heat shock protein C1 (hspC1), found in Rickettsia conorii (strain ATCC VR-613 / Malish 7).